We begin with the raw amino-acid sequence, 32 residues long: 24 kDa flagellin (32 aa).

This sequence belongs to the archaeal flagellin family. Glycosylated.

Its subcellular location is the archaeal flagellum. Functionally, flagellin is the subunit protein which polymerizes to form the filaments of archaeal flagella. The chain is 24 kDa flagellin from Methanospirillum hungatei.